The sequence spans 403 residues: Phosphoglycerate kinase (403 aa).

Residues 22–24 (DFN), R37, 60–63 (HFGR), R119, and R152 each bind substrate. ATP-binding positions include K202, E324, and 354–357 (GGDT).

It belongs to the phosphoglycerate kinase family. In terms of assembly, monomer.

The protein localises to the cytoplasm. The catalysed reaction is (2R)-3-phosphoglycerate + ATP = (2R)-3-phospho-glyceroyl phosphate + ADP. It participates in carbohydrate degradation; glycolysis; pyruvate from D-glyceraldehyde 3-phosphate: step 2/5. The sequence is that of Phosphoglycerate kinase from Maricaulis maris (strain MCS10) (Caulobacter maris).